Here is a 105-residue protein sequence, read N- to C-terminus: Nucleoid-associated protein Dred_0043 (105 aa).

The protein belongs to the YbaB/EbfC family. In terms of assembly, homodimer.

It is found in the cytoplasm. The protein localises to the nucleoid. In terms of biological role, binds to DNA and alters its conformation. May be involved in regulation of gene expression, nucleoid organization and DNA protection. The protein is Nucleoid-associated protein Dred_0043 of Desulforamulus reducens (strain ATCC BAA-1160 / DSM 100696 / MI-1) (Desulfotomaculum reducens).